An 83-amino-acid chain; its full sequence is Putative protein T-ENOL (83 aa).

Positions 1 to 33 (MASTPMGNEGEKKSSWPSQAAPSLRGGPASLSR) are disordered.

The sequence is that of Putative protein T-ENOL from Homo sapiens (Human).